Reading from the N-terminus, the 864-residue chain is Leucine--tRNA ligase (864 aa).

A 'HIGH' region motif is present at residues P42–H52. The 'KMSKS' region signature appears at K624–S628. An ATP-binding site is contributed by K627.

This sequence belongs to the class-I aminoacyl-tRNA synthetase family.

Its subcellular location is the cytoplasm. It catalyses the reaction tRNA(Leu) + L-leucine + ATP = L-leucyl-tRNA(Leu) + AMP + diphosphate. The protein is Leucine--tRNA ligase of Burkholderia pseudomallei (strain 1710b).